The primary structure comprises 843 residues: Protein translocase subunit SecA (843 aa).

Residues Gln-91, 109 to 113, and Asp-498 each bind ATP; that span reads GEGKT. Positions 796–825 are enriched in basic and acidic residues; the sequence is DFGKAEHVSAEDGKEKAKAEPYVKDEHIGR. The segment at 796-833 is disordered; that stretch reads DFGKAEHVSAEDGKEKAKAEPYVKDEHIGRNDPCPCGS. 4 residues coordinate Zn(2+): Cys-829, Cys-831, Cys-840, and His-841.

The protein belongs to the SecA family. As to quaternary structure, monomer and homodimer. Part of the essential Sec protein translocation apparatus which comprises SecA, SecYEG and auxiliary proteins SecDF. Other proteins may also be involved. The cofactor is Zn(2+).

It localises to the cell membrane. It is found in the cytoplasm. The catalysed reaction is ATP + H2O + cellular proteinSide 1 = ADP + phosphate + cellular proteinSide 2.. Functionally, part of the Sec protein translocase complex. Interacts with the SecYEG preprotein conducting channel. Has a central role in coupling the hydrolysis of ATP to the transfer of proteins into and across the cell membrane, serving as an ATP-driven molecular motor driving the stepwise translocation of polypeptide chains across the membrane. This Staphylococcus saprophyticus subsp. saprophyticus (strain ATCC 15305 / DSM 20229 / NCIMB 8711 / NCTC 7292 / S-41) protein is Protein translocase subunit SecA.